A 91-amino-acid polypeptide reads, in one-letter code: UPF0250 protein mma_3250 (91 aa).

It belongs to the UPF0250 family.

The chain is UPF0250 protein mma_3250 from Janthinobacterium sp. (strain Marseille) (Minibacterium massiliensis).